We begin with the raw amino-acid sequence, 379 residues long: MKFKLKTTSGAARRGELTFNRPQGEFSVQTPAFMPVGTYGTVKGMTPEEVRATGAEILLGNTFHLWLRPGQEVMRKHGDLHDFMQWHRPILTDSGGFQVFSLGKLRKITEEGVKFQNPINGERIFLSPEKSMEIQYDLGSDIVMIFDECTPYPATFDYAKKSMEMSLRWAKRSRDRFDELGNKNALFGIVQGGTFEELRKVSAENLINIGFDGYAVGGLAVGEPKEEMHRILEFTTPLLPADKPRYLMGVGKPEDLVEGVRRGIDMFDCVMPTRNARNGHLFVTDGIVKIRNAKYKDDTSPLDPHCDCYTCQHYTKSYLYHLDKCGEILGARLNTIHNLRYYQRLMEQIRTAIEQDRFDDFVQEFYARMDKPVPPLQKA.

The Proton acceptor role is filled by aspartate 93. Residues 93-97 (DSGGF), aspartate 147, glutamine 191, and glycine 218 contribute to the substrate site. The interval 249-255 (GVGKPED) is RNA binding. The active-site Nucleophile is the aspartate 268. Residues 273–277 (TRNAR) are RNA binding; important for wobble base 34 recognition. Residues cysteine 306, cysteine 308, cysteine 311, and histidine 337 each contribute to the Zn(2+) site.

Belongs to the queuine tRNA-ribosyltransferase family. In terms of assembly, homodimer. Within each dimer, one monomer is responsible for RNA recognition and catalysis, while the other monomer binds to the replacement base PreQ1. It depends on Zn(2+) as a cofactor.

It carries out the reaction 7-aminomethyl-7-carbaguanine + guanosine(34) in tRNA = 7-aminomethyl-7-carbaguanosine(34) in tRNA + guanine. The protein operates within tRNA modification; tRNA-queuosine biosynthesis. In terms of biological role, catalyzes the base-exchange of a guanine (G) residue with the queuine precursor 7-aminomethyl-7-deazaguanine (PreQ1) at position 34 (anticodon wobble position) in tRNAs with GU(N) anticodons (tRNA-Asp, -Asn, -His and -Tyr). Catalysis occurs through a double-displacement mechanism. The nucleophile active site attacks the C1' of nucleotide 34 to detach the guanine base from the RNA, forming a covalent enzyme-RNA intermediate. The proton acceptor active site deprotonates the incoming PreQ1, allowing a nucleophilic attack on the C1' of the ribose to form the product. After dissociation, two additional enzymatic reactions on the tRNA convert PreQ1 to queuine (Q), resulting in the hypermodified nucleoside queuosine (7-(((4,5-cis-dihydroxy-2-cyclopenten-1-yl)amino)methyl)-7-deazaguanosine). This chain is Queuine tRNA-ribosyltransferase, found in Mannheimia succiniciproducens (strain KCTC 0769BP / MBEL55E).